The following is a 357-amino-acid chain: LINE-1 retrotransposable element ORF1 protein (357 aa).

Residues 1–40 (MAKGKRKNPTNRNQDHSPSSERSTPTPPSPGHPNTTENLD) are disordered. Positions 59 to 156 (HKSLKDLQES…IENIDTTVKE (98 aa)) form a coiled coil. The tract at residues 179–274 (NLRIIGIDEN…KGRPIRITPD (96 aa)) is RNA recognition motif (RRM) domain. The interval 278–339 (ETMKARRAWT…STNPALQRII (62 aa)) is C-terminal domain (CTD).

This sequence belongs to the transposase 22 family. Homotrimer (via coiled coil domain). May also form larger homooligomers. Interacts with Tex19.1 and UBR2. Interacts with MOV10. In terms of processing, polyubiquitinated, probably by UBR2, which induces its degradation. In terms of tissue distribution, expressed in meiotic spermatocytes and in the cerebellum (at protein level).

It localises to the nucleus. It is found in the nucleolus. The protein resides in the cytoplasm. The protein localises to the cytoplasmic ribonucleoprotein granule. Its subcellular location is the stress granule. Its function is as follows. Nucleic acid-binding protein which is essential for retrotransposition of LINE-1 elements in the genome. Functions as a nucleic acid chaperone binding its own transcript and therefore preferentially mobilizing the transcript from which they are encoded. The sequence is that of LINE-1 retrotransposable element ORF1 protein from Mus musculus (Mouse).